Reading from the N-terminus, the 117-residue chain is Large ribosomal subunit protein uL18 (117 aa).

Belongs to the universal ribosomal protein uL18 family. In terms of assembly, part of the 50S ribosomal subunit; part of the 5S rRNA/L5/L18/L25 subcomplex. Contacts the 5S and 23S rRNAs.

This is one of the proteins that bind and probably mediate the attachment of the 5S RNA into the large ribosomal subunit, where it forms part of the central protuberance. The chain is Large ribosomal subunit protein uL18 from Idiomarina loihiensis (strain ATCC BAA-735 / DSM 15497 / L2-TR).